The primary structure comprises 260 residues: tRNA pseudouridine synthase C (260 aa).

Asp-54 is an active-site residue.

It belongs to the pseudouridine synthase RluA family.

It catalyses the reaction uridine(65) in tRNA = pseudouridine(65) in tRNA. Responsible for synthesis of pseudouridine from uracil-65 in transfer RNAs. This chain is tRNA pseudouridine synthase C (truC), found in Salmonella typhi.